A 99-amino-acid chain; its full sequence is Large ribosomal subunit protein uL23 (99 aa).

This sequence belongs to the universal ribosomal protein uL23 family. As to quaternary structure, part of the 50S ribosomal subunit. Contacts protein L29, and trigger factor when it is bound to the ribosome.

Its function is as follows. One of the early assembly proteins it binds 23S rRNA. One of the proteins that surrounds the polypeptide exit tunnel on the outside of the ribosome. Forms the main docking site for trigger factor binding to the ribosome. The polypeptide is Large ribosomal subunit protein uL23 (Xanthomonas campestris pv. campestris (strain B100)).